A 97-amino-acid chain; its full sequence is Putative septation protein SpoVG (97 aa).

Belongs to the SpoVG family.

Functionally, could be involved in septation. This chain is Putative septation protein SpoVG, found in Anaeromyxobacter sp. (strain Fw109-5).